Consider the following 157-residue polypeptide: Ribosome maturation factor RimP (157 aa).

It belongs to the RimP family.

It is found in the cytoplasm. In terms of biological role, required for maturation of 30S ribosomal subunits. The sequence is that of Ribosome maturation factor RimP from Thermosynechococcus vestitus (strain NIES-2133 / IAM M-273 / BP-1).